The primary structure comprises 130 residues: Large ribosomal subunit protein bL17 (130 aa).

This sequence belongs to the bacterial ribosomal protein bL17 family. Part of the 50S ribosomal subunit. Contacts protein L32.

This chain is Large ribosomal subunit protein bL17, found in Paraburkholderia xenovorans (strain LB400).